The following is a 173-amino-acid chain: Bifunctional protein PyrR (173 aa).

The PRPP-binding motif lies at 93-105 (VILIDDVLYTGRT).

This sequence belongs to the purine/pyrimidine phosphoribosyltransferase family. PyrR subfamily. As to quaternary structure, homodimer and homohexamer; in equilibrium.

The enzyme catalyses UMP + diphosphate = 5-phospho-alpha-D-ribose 1-diphosphate + uracil. Functionally, regulates transcriptional attenuation of the pyrimidine nucleotide (pyr) operon by binding in a uridine-dependent manner to specific sites on pyr mRNA. This disrupts an antiterminator hairpin in the RNA and favors formation of a downstream transcription terminator, leading to a reduced expression of downstream genes. Also displays a weak uracil phosphoribosyltransferase activity which is not physiologically significant. The protein is Bifunctional protein PyrR of Streptococcus pyogenes serotype M49 (strain NZ131).